Here is a 275-residue protein sequence, read N- to C-terminus: Homeobox protein Hox-C12a (275 aa).

Disordered regions lie at residues 101 to 129 (SREN…DHGM) and 148 to 213 (QLTQ…KRKP). Residues 155 to 177 (SCQSMESDSSSSLLNEASKPSSS) show a composition bias toward low complexity. The segment covering 178–194 (DTQTLVSPGSHTGTITA) has biased composition (polar residues). The segment at residues 207–266 (TRKKRKPYSKLQLAELEGEFMMNEFITRQRRRELSDRLNLSDQQVKIWFQNRRMKKKRLM) is a DNA-binding region (homeobox).

This sequence belongs to the Abd-B homeobox family.

The protein resides in the nucleus. Sequence-specific transcription factor which is part of a developmental regulatory system that provides cells with specific positional identities on the anterior-posterior axis. This Takifugu rubripes (Japanese pufferfish) protein is Homeobox protein Hox-C12a (hoxc12a).